The primary structure comprises 383 residues: Soluble hydrogenase 42 kDa subunit (383 aa).

Lys194 carries the post-translational modification N6-(pyridoxal phosphate)lysine.

The protein belongs to the class-V pyridoxal-phosphate-dependent aminotransferase family. As to quaternary structure, heterodimer of a large and a small subunit. Pyridoxal 5'-phosphate serves as cofactor.

The protein localises to the cytoplasm. Its function is as follows. Soluble hydrogenase catalyzes both production and consumption of hydrogen from suitable artificial electron donors or acceptors. This subunit catalyzes the tritium-exchange activity. This is Soluble hydrogenase 42 kDa subunit from Anabaena cylindrica.